Reading from the N-terminus, the 194-residue chain is 4'-phosphooxetanocin A phosphatase (194 aa).

2 residues coordinate 4'-phosphooxetanocin A: R16 and W17. W17 serves as a coordination point for oxetanocin A. Residues H31, H66, and D67 each coordinate Mg(2+). 4'-phosphooxetanocin A is bound by residues H75, S78, and K81. Oxetanocin A-binding residues include H75 and S78. Position 132 (D132) interacts with Mg(2+).

This sequence belongs to the 5DNU family. Homodimer. Requires Mg(2+) as cofactor. The cofactor is Co(2+). Mn(2+) serves as cofactor.

The catalysed reaction is 4'-phosphooxetanocin A + H2O = oxetanocin A + phosphate. Phosphohydrolase involved in the biosynthesis of oxetanocin A (OXT-A), a nucleoside analog with antitumor, antiviral and antibacterial properties. Catalyzes the hydrolysis of phosphooxetanocin A (OXT-A-P) to generate oxetanocin A (OXT-A) and a molecule of inorganic phosphate. Can also bind and hydrolyze OXT triphosphate (OXT-A-PPP) and OXT diphosphate (OXT-A-PP), and thus catalyze the sequential hydrolysis of tri-, di- and mono-phosphorylated oxetanocin A compounds, releasing one molecule of inorganic phosphate at a time. In vitro can also use dATP, dAMP and dADP. The chain is 4'-phosphooxetanocin A phosphatase from Priestia megaterium (Bacillus megaterium).